A 75-amino-acid chain; its full sequence is MTDKIIQQLEARINDLECQLAFQEQTIEDLNGALSQQQLQITKMLDQMKYVVGKVKNMDSSNLADPSEETPPPHY.

This sequence belongs to the SlyX family.

This chain is Protein SlyX homolog, found in Vibrio campbellii (strain ATCC BAA-1116).